The chain runs to 669 residues: Elongation factor G 2 (669 aa).

The tr-type G domain maps to 1-276; it reads MSIRNIGIMA…SIVDYLPSPF (276 aa). Residues 10–17, 74–78, and 128–131 each bind GTP; these read AHIDAGKT, DTPGH, and NKMD.

This sequence belongs to the TRAFAC class translation factor GTPase superfamily. Classic translation factor GTPase family. EF-G/EF-2 subfamily.

Its subcellular location is the cytoplasm. Functionally, catalyzes the GTP-dependent ribosomal translocation step during translation elongation. During this step, the ribosome changes from the pre-translocational (PRE) to the post-translocational (POST) state as the newly formed A-site-bound peptidyl-tRNA and P-site-bound deacylated tRNA move to the P and E sites, respectively. Catalyzes the coordinated movement of the two tRNA molecules, the mRNA and conformational changes in the ribosome. This chain is Elongation factor G 2 (fusB), found in Borreliella burgdorferi (strain ATCC 35210 / DSM 4680 / CIP 102532 / B31) (Borrelia burgdorferi).